A 380-amino-acid polypeptide reads, in one-letter code: Cytochrome b (380 aa).

Helical transmembrane passes span 34–54 (FGSL…LLAA), 78–99 (WLIR…YLHI), 114–134 (WNTG…GYVL), and 179–199 (FFTL…IHLT). The heme b site is built by His-84 and His-98. The heme b site is built by His-183 and His-197. An a ubiquinone-binding site is contributed by His-202. The next 4 helical transmembrane spans lie at 227–247 (LKDT…ALFS), 289–309 (LGGV…PLLH), 321–341 (LFQL…WVGS), and 348–368 (FIII…ILFP).

Belongs to the cytochrome b family. The cytochrome bc1 complex contains 11 subunits: 3 respiratory subunits (MT-CYB, CYC1 and UQCRFS1), 2 core proteins (UQCRC1 and UQCRC2) and 6 low-molecular weight proteins (UQCRH/QCR6, UQCRB/QCR7, UQCRQ/QCR8, UQCR10/QCR9, UQCR11/QCR10 and a cleavage product of UQCRFS1). This cytochrome bc1 complex then forms a dimer. The cofactor is heme b.

It is found in the mitochondrion inner membrane. Component of the ubiquinol-cytochrome c reductase complex (complex III or cytochrome b-c1 complex) that is part of the mitochondrial respiratory chain. The b-c1 complex mediates electron transfer from ubiquinol to cytochrome c. Contributes to the generation of a proton gradient across the mitochondrial membrane that is then used for ATP synthesis. In Grus nigricollis (Black-necked crane), this protein is Cytochrome b (MT-CYB).